A 132-amino-acid chain; its full sequence is MEALAELIKRKVPNEGLIIEVGVGFYLKVAKKLKEYGFNVVVVDINQEAVKNAIKERIPGFVDDVFNPNLKIYLKARAIYSIRPNPEIMMALLTLAKKVKVPLYIVPLSGDVPPREMKLINYKGISVYVWEP.

It belongs to the UPF0146 family.

The protein is UPF0146 protein PF0123 of Pyrococcus furiosus (strain ATCC 43587 / DSM 3638 / JCM 8422 / Vc1).